Consider the following 233-residue polypeptide: Large ribosomal subunit protein uL1 (233 aa).

It belongs to the universal ribosomal protein uL1 family. In terms of assembly, part of the 50S ribosomal subunit.

Its function is as follows. Binds directly to 23S rRNA. The L1 stalk is quite mobile in the ribosome, and is involved in E site tRNA release. In terms of biological role, protein L1 is also a translational repressor protein, it controls the translation of the L11 operon by binding to its mRNA. This Geobacillus kaustophilus (strain HTA426) protein is Large ribosomal subunit protein uL1.